Here is a 242-residue protein sequence, read N- to C-terminus: MPDYIRTSRAADSLRDIKITPHFLPHTDGSCLIECGNTKVICTASVDENAPPFLHGKNQGWVTAEYGMLPASTALRMRREASAGKQSGRTQEIQRLIGRSLRAVVDMEKLGERQILIDCDVIQADGGTRTASITGAFVALQIAVGKLVSDGILSENPILEAVAAVSAGVVNGVPLLDLDYPEDSGCDSDVNIVMTASGKIIEIQGTAEGAPFSLDELGKLVALAQKGIGELLRYQQNALSVA.

Residues Arg-89 and 127-129 (GTR) each bind phosphate.

The protein belongs to the RNase PH family. As to quaternary structure, homohexameric ring arranged as a trimer of dimers.

The enzyme catalyses tRNA(n+1) + phosphate = tRNA(n) + a ribonucleoside 5'-diphosphate. Functionally, phosphorolytic 3'-5' exoribonuclease that plays an important role in tRNA 3'-end maturation. Removes nucleotide residues following the 3'-CCA terminus of tRNAs; can also add nucleotides to the ends of RNA molecules by using nucleoside diphosphates as substrates, but this may not be physiologically important. Probably plays a role in initiation of 16S rRNA degradation (leading to ribosome degradation) during starvation. This chain is Ribonuclease PH, found in Neisseria gonorrhoeae (strain ATCC 700825 / FA 1090).